We begin with the raw amino-acid sequence, 202 residues long: Recombination protein RecR (202 aa).

The C4-type zinc-finger motif lies at 57-72 (CGVCRTFTEQPCCDIC). The Toprim domain occupies 81 to 176 (GQICVVESPS…STTKIAHGVP (96 aa)).

Belongs to the RecR family.

May play a role in DNA repair. It seems to be involved in an RecBC-independent recombinational process of DNA repair. It may act with RecF and RecO. The protein is Recombination protein RecR of Hamiltonella defensa subsp. Acyrthosiphon pisum (strain 5AT).